The following is a 100-amino-acid chain: Small ribosomal subunit protein uS14 (100 aa).

This sequence belongs to the universal ribosomal protein uS14 family. In terms of assembly, part of the 30S ribosomal subunit. Contacts proteins S3 and S10.

Functionally, binds 16S rRNA, required for the assembly of 30S particles and may also be responsible for determining the conformation of the 16S rRNA at the A site. The polypeptide is Small ribosomal subunit protein uS14 (Trichormus variabilis (strain ATCC 29413 / PCC 7937) (Anabaena variabilis)).